A 276-amino-acid polypeptide reads, in one-letter code: Odontogenic ameloblast-associated protein (276 aa).

The first 15 residues, 1–15 (MRTLILLGILGATMS), serve as a signal peptide directing secretion. O-linked (GalNAc...) threonine glycosylation is found at threonine 101, threonine 113, and threonine 117. The interaction with ARHGEF5 stretch occupies residues 125 to 127 (MPS). Serine 246 carries an O-linked (GalNAc...) serine glycan. O-linked (GalNAc...) threonine glycans are attached at residues threonine 247, threonine 248, and threonine 252. The O-linked (GalNAc...) serine glycan is linked to serine 253. 4 O-linked (GalNAc...) threonine glycosylation sites follow: threonine 254, threonine 258, threonine 260, and threonine 270. Residue serine 272 is glycosylated (O-linked (GalNAc...) serine).

The protein belongs to the ODAM family. Interacts (via C-terminus) with ARHGEF5. O-glycosylated.

Its subcellular location is the secreted. The protein localises to the cytoplasm. It localises to the nucleus. In terms of biological role, tooth-associated epithelia protein that probably plays a role in odontogenesis, the complex process that results in the initiation and generation of the tooth. May be incorporated in the enamel matrix at the end of mineralization process. Involved in the induction of RHOA activity via interaction with ARHGEF and expression of downstream factors such as ROCK. Plays a role in attachment of the junctional epithelium to the tooth surface. This chain is Odontogenic ameloblast-associated protein (ODAM), found in Sus scrofa (Pig).